Consider the following 695-residue polypeptide: Pre-mRNA-splicing factor clf-1 (695 aa).

HAT repeat units follow at residues 52 to 84 (EYQG…WELE), 86 to 118 (KEFA…AEIK), 120 to 152 (RNIN…VMEM), 154 to 185 (GDIP…LEKR), 187 to 218 (GEFD…FEEE), 220 to 259 (GTSD…YEAR), 261 to 295 (REYE…FEKQ), 305 to 337 (VILT…LEES), 339 to 373 (GDVD…LFLF), 383 to 419 (KDIG…FEIR), 421 to 452 (GQLT…LEQK), 454 to 486 (YEFE…LERG), 488 to 522 (DDLE…FEEE), 524 to 555 (GEYE…FEIN), 578 to 616 (EAKA…FEKT), and 621 to 654 (EDIE…YIFP).

This sequence belongs to the crooked-neck family. As to quaternary structure, associated with the spliceosome.

The protein resides in the nucleus. Functionally, involved in pre-mRNA splicing and cell cycle progression. Required for the spliceosome assembly and initiation of the DNA replication. In Neurospora crassa (strain ATCC 24698 / 74-OR23-1A / CBS 708.71 / DSM 1257 / FGSC 987), this protein is Pre-mRNA-splicing factor clf-1 (clf-1).